Reading from the N-terminus, the 275-residue chain is Penicillin-insensitive murein endopeptidase (275 aa).

Positions 1–19 (MKNWIVGMVALVTMVPVMA) are cleaved as a signal peptide. 3 disulfides stabilise this stretch: Cys-44-Cys-264, Cys-187-Cys-235, and Cys-216-Cys-223. Positions 110, 113, 120, 147, and 211 each coordinate Zn(2+). A disordered region spans residues 227–262 (DTPPPGDGCGAELESWFQPPPPSAKPGKTLPPPLPP). Residues 244–262 (QPPPPSAKPGKTLPPPLPP) are compositionally biased toward pro residues.

Belongs to the peptidase M74 family. Dimer. Requires Zn(2+) as cofactor.

The protein localises to the periplasm. In terms of biological role, murein endopeptidase that cleaves the D-alanyl-meso-2,6-diamino-pimelyl amide bond that connects peptidoglycan strands. Likely plays a role in the removal of murein from the sacculus. The polypeptide is Penicillin-insensitive murein endopeptidase (Yersinia pestis).